The sequence spans 95 residues: CRISPR-associated endoribonuclease Cas2 1 (95 aa).

D8 serves as a coordination point for Mg(2+).

This sequence belongs to the CRISPR-associated endoribonuclease Cas2 protein family. In terms of assembly, homodimer, forms a heterotetramer with a Cas1 homodimer. It depends on Mg(2+) as a cofactor.

Its function is as follows. CRISPR (clustered regularly interspaced short palindromic repeat), is an adaptive immune system that provides protection against mobile genetic elements (viruses, transposable elements and conjugative plasmids). CRISPR clusters contain sequences complementary to antecedent mobile elements and target invading nucleic acids. CRISPR clusters are transcribed and processed into CRISPR RNA (crRNA). Functions as a ssRNA-specific endoribonuclease. Involved in the integration of spacer DNA into the CRISPR cassette. The protein is CRISPR-associated endoribonuclease Cas2 1 of Pyrobaculum aerophilum (strain ATCC 51768 / DSM 7523 / JCM 9630 / CIP 104966 / NBRC 100827 / IM2).